Reading from the N-terminus, the 230-residue chain is Probable septum site-determining protein MinC (230 aa).

This sequence belongs to the MinC family. In terms of assembly, interacts with MinD and FtsZ.

In terms of biological role, cell division inhibitor that blocks the formation of polar Z ring septums. Rapidly oscillates between the poles of the cell to destabilize FtsZ filaments that have formed before they mature into polar Z rings. Prevents FtsZ polymerization. This chain is Probable septum site-determining protein MinC, found in Rhodopseudomonas palustris (strain BisA53).